We begin with the raw amino-acid sequence, 599 residues long: Retrotransposon Gag-like protein 5 (599 aa).

Disordered regions lie at residues 77 to 97 (DPTP…CWPP), 116 to 139 (DYTN…ELHS), and 377 to 450 (FPQE…EEDE). Acidic residues predominate over residues 78-90 (PTPEEEEEEEEEV). Acidic residues-rich tracts occupy residues 393–432 (DEME…EDKE) and 439–450 (DSDENKYEEEDE).

The polypeptide is Retrotransposon Gag-like protein 5 (Mus musculus (Mouse)).